Consider the following 64-residue polypeptide: Alpha-mammal toxin Lqh2 (64 aa).

The LCN-type CS-alpha/beta domain maps to 2–64; it reads KDGYIVDDVN…VRTKGPGRCR (63 aa). 4 disulfide bridges follow: C12-C63, C16-C36, C22-C46, and C26-C48. At R64 the chain carries Arginine amide.

Belongs to the long (4 C-C) scorpion toxin superfamily. Sodium channel inhibitor family. Alpha subfamily. As to expression, expressed by the venom gland.

It localises to the secreted. In terms of biological role, alpha toxins bind voltage-independently at site-3 of sodium channels (Nav) and inhibit the inactivation of the activated channels, thereby blocking neuronal transmission. The dissociation is voltage-dependent. Is active on mammals and competes for alpha-toxins binding on both mammalian and cockroach sodium channels. The sequence is that of Alpha-mammal toxin Lqh2 from Leiurus hebraeus (Hebrew deathstalker scorpion).